The primary structure comprises 452 residues: L-seryl-tRNA(Sec) selenium transferase (452 aa).

An N6-(pyridoxal phosphate)lysine modification is found at K285.

It belongs to the SelA family. Pyridoxal 5'-phosphate is required as a cofactor.

The protein localises to the cytoplasm. It carries out the reaction L-seryl-tRNA(Sec) + selenophosphate + H(+) = L-selenocysteinyl-tRNA(Sec) + phosphate. It participates in aminoacyl-tRNA biosynthesis; selenocysteinyl-tRNA(Sec) biosynthesis; selenocysteinyl-tRNA(Sec) from L-seryl-tRNA(Sec) (bacterial route): step 1/1. In terms of biological role, converts seryl-tRNA(Sec) to selenocysteinyl-tRNA(Sec) required for selenoprotein biosynthesis. The polypeptide is L-seryl-tRNA(Sec) selenium transferase (Aquifex aeolicus (strain VF5)).